Reading from the N-terminus, the 496-residue chain is UDP-N-acetylmuramoylalanine--D-glutamate ligase (496 aa).

130-136 (GTNGKTT) is an ATP binding site.

The protein belongs to the MurCDEF family.

The protein resides in the cytoplasm. The enzyme catalyses UDP-N-acetyl-alpha-D-muramoyl-L-alanine + D-glutamate + ATP = UDP-N-acetyl-alpha-D-muramoyl-L-alanyl-D-glutamate + ADP + phosphate + H(+). The protein operates within cell wall biogenesis; peptidoglycan biosynthesis. Cell wall formation. Catalyzes the addition of glutamate to the nucleotide precursor UDP-N-acetylmuramoyl-L-alanine (UMA). The protein is UDP-N-acetylmuramoylalanine--D-glutamate ligase (murD) of Mycobacterium tuberculosis (strain CDC 1551 / Oshkosh).